Consider the following 382-residue polypeptide: Exostosin-1 homolog (382 aa).

Positions 1-20 (MQNVMKFHLVIFMLFGSVRL) are cleaved as a signal peptide. Asn268 carries an N-linked (GlcNAc...) asparagine glycan.

It belongs to the glycosyltransferase 47 family. In terms of assembly, interacts with rib-2.

The protein localises to the endoplasmic reticulum. It localises to the golgi apparatus. Required for the biosynthesis of heparan sulfate by positively regulating N-acetylglucosamine transferase II (GlcNAcT-II) and glucuronyl transferase II (GlcAT-II) activities of glycosyltransferase rib-2. Probably not directly involved in chondroitin sulfate biosynthesis but negatively regulates chondroitin sulfate levels. Maternally required for normal ventral epidermal enclosure and for embryo elongation during the early stages of embryonic development. In addition, involved in the elongation of the pharyngeal isthmus and in the organization of the actin cytoskeleton in the pharyngeal muscles during the later stages embryonic development. In adults, regulates egg-laying and the normal morphogenesis of the vulva. Also involved in the directed migration of hermaphrodite-specific neurons. The protein is Exostosin-1 homolog (rib-1) of Caenorhabditis elegans.